Reading from the N-terminus, the 159-residue chain is Transcription elongation factor GreA (159 aa).

This sequence belongs to the GreA/GreB family.

Its function is as follows. Necessary for efficient RNA polymerase transcription elongation past template-encoded arresting sites. The arresting sites in DNA have the property of trapping a certain fraction of elongating RNA polymerases that pass through, resulting in locked ternary complexes. Cleavage of the nascent transcript by cleavage factors such as GreA or GreB allows the resumption of elongation from the new 3'terminus. GreA releases sequences of 2 to 3 nucleotides. In Orientia tsutsugamushi (strain Boryong) (Rickettsia tsutsugamushi), this protein is Transcription elongation factor GreA.